A 2034-amino-acid polypeptide reads, in one-letter code: Pecanex-like protein 3 (2034 aa).

A run of 2 helical transmembrane segments spans residues 33-53 (CFHL…YMVL) and 54-74 (PPSL…FATI). Positions 96-118 (STMGELEEEPAQGDSNPPRDPGV) are disordered. At Ser-127 the chain carries Phosphoserine. Thr-129 carries the post-translational modification Phosphothreonine. Disordered regions lie at residues 193-242 (IGDL…PLLK), 260-517 (DRAL…LRPP), and 540-625 (VLPA…SHSR). Residues 294 to 303 (KAGSSDSCFS) show a composition bias toward polar residues. Residues 305–319 (TDRETLSSFKSEKTN) are compositionally biased toward basic and acidic residues. An N-linked (GlcNAc...) asparagine glycan is attached at Asn-319. Position 370 is a phosphothreonine (Thr-370). Over residues 391–409 (PSKRQPPLRRHSPPGRAPR) the composition is skewed to basic residues. A phosphoserine mark is found at Ser-392 and Ser-431. Positions 427-436 (GSELSPASSL) are enriched in polar residues. Residues 444–460 (TDSSSSTSCYSPESSRG) show a composition bias toward low complexity. The span at 488-497 (TQRTPSTASA) shows a compositional bias: polar residues. Phosphoserine is present on Ser-505. Transmembrane regions (helical) follow at residues 790 to 812 (VLEN…LLLL), 819 to 836 (IWVF…YSLL), 852 to 872 (WVIA…IWLL), 880 to 900 (PFPP…FFCA), 903 to 923 (VATV…LPQV), 946 to 968 (SPLT…YGFC), and 980 to 1000 (HVPV…YHLS). Ser-1025 is subject to Phosphoserine. The next 4 membrane-spanning stretches (helical) occupy residues 1053 to 1073 (LVMC…TVFI), 1078 to 1098 (VLGF…HYLL), 1244 to 1264 (FVLT…HAFA), and 1280 to 1300 (LLSG…VFIM). Ser-1697 is subject to Phosphoserine. An N-linked (GlcNAc...) asparagine glycan is attached at Asn-1770. The interval 1844–2034 (GGLTSLSNNP…AAQPLLEHQY (191 aa)) is disordered. The segment covering 1890–1910 (RPPPLLQWPPPRLPGPPPASP) has biased composition (pro residues). Position 1909 is a phosphoserine (Ser-1909). Low complexity predominate over residues 1925-1939 (GLLSSEGPSGKWSLG). Ser-1955 carries the post-translational modification Phosphoserine. The span at 1969-1978 (LSLSLSLSLS) shows a compositional bias: low complexity.

This sequence belongs to the pecanex family.

It is found in the membrane. The polypeptide is Pecanex-like protein 3 (Homo sapiens (Human)).